A 147-amino-acid polypeptide reads, in one-letter code: Large ribosomal subunit protein uL15 (147 aa).

Positions 1 to 12 are enriched in basic and acidic residues; that stretch reads MTLRLNDLKPAD. The interval 1-61 is disordered; that stretch reads MTLRLNDLKP…GFEGGQTPMQ (61 aa). Residues 23 to 33 are compositionally biased toward gly residues; sequence RGIGSGLGKTA. The segment covering 34–47 has biased composition (basic residues); it reads GRGHKGSFARKGGG.

This sequence belongs to the universal ribosomal protein uL15 family. As to quaternary structure, part of the 50S ribosomal subunit.

Functionally, binds to the 23S rRNA. This is Large ribosomal subunit protein uL15 from Xanthomonas oryzae pv. oryzae (strain MAFF 311018).